A 1118-amino-acid chain; its full sequence is Cytospin-A (1118 aa).

Disordered stretches follow at residues 1 to 50 (MKKA…AALS), 75 to 175 (KKSN…DNQI), 294 to 324 (SLSP…GSVE), and 359 to 391 (SSDD…NASE). Composition is skewed to low complexity over residues 34–48 (APTG…AAAA), 80–90 (SSAAPSAPAPA), and 99–113 (KSST…RSTS). Over residues 120-131 (SSTRERLRERTR) the composition is skewed to basic and acidic residues. Over residues 133–145 (NQSKKLPSVSQGA) the composition is skewed to polar residues. Residues 158–171 (TATEGDIRMSKSKS) show a composition bias toward basic and acidic residues. The stretch at 168–281 (KSKSDNQISD…LNALGFSLEQ (114 aa)) forms a coiled coil. Residues 294-304 (SLSPEITPGNQ) are compositionally biased toward polar residues. Residues 359–373 (SSDDALDAPSSSESE) show a composition bias toward low complexity. Residues serine 385, serine 386, and serine 390 each carry the phosphoserine modification. 2 coiled-coil regions span residues 395 to 450 (ACLT…MESL) and 488 to 808 (RYME…RGRV). Phosphoserine is present on residues serine 869, serine 882, and serine 888. Residues 916–999 (EHLLRTSSTS…STRSRIREER (84 aa)) form a disordered region. Residues 947 to 957 (RSSEEMKRDIS) are compositionally biased toward basic and acidic residues. Positions 972–992 (TTSPQLSLSSSPTASVTPSTR) are enriched in low complexity. The Calponin-homology (CH) domain occupies 1012–1117 (GSKRNALLKW…YVTAIYKYFE (106 aa)).

It belongs to the cytospin-A family. In terms of assembly, may interact with both microtubules and actin cytoskeleton.

Its subcellular location is the cytoplasm. It localises to the cytoskeleton. The protein localises to the spindle. The protein resides in the cell junction. It is found in the gap junction. Its function is as follows. Involved in cytokinesis and spindle organization. May play a role in actin cytoskeleton organization and microtubule stabilization and hence required for proper cell adhesion and migration. In Rattus norvegicus (Rat), this protein is Cytospin-A (Specc1l).